The chain runs to 246 residues: U11/U12 small nuclear ribonucleoprotein 35 kDa protein (246 aa).

The RRM domain occupies 51–129 (LTLFVARLNL…HEIFVDYELE (79 aa)). Lysine 172 participates in a covalent cross-link: Glycyl lysine isopeptide (Lys-Gly) (interchain with G-Cter in SUMO2). A disordered region spans residues 187–217 (SRSRERHWDSRTRDRDHDRGREKRWQEREPT). Basic and acidic residues predominate over residues 192 to 217 (RHWDSRTRDRDHDRGREKRWQEREPT).

In terms of assembly, component of the U11/U12 snRNPs that are part of the U12-type spliceosome. As to expression, expressed in heart, liver, skeletal muscle and pancreas.

The protein localises to the nucleus. This chain is U11/U12 small nuclear ribonucleoprotein 35 kDa protein (SNRNP35), found in Homo sapiens (Human).